A 413-amino-acid chain; its full sequence is uncharacterized protein (413 aa).

This is an uncharacterized protein from Mycoplasma pneumoniae (strain ATCC 29342 / M129 / Subtype 1) (Mycoplasmoides pneumoniae).